We begin with the raw amino-acid sequence, 604 residues long: Sulfite reductase [NADPH] flavoprotein alpha-component (604 aa).

The region spanning 66 to 204 (VTVLSASQTG…SANAWTDNIA (139 aa)) is the Flavodoxin-like domain. FMN is bound by residues 72–77 (SQTGNA), 119–122 (STQG), and 155–164 (LGDSSYPNFC). Residues 239–453 (AAPFPAALLA…VERNDGFRLP (215 aa)) enclose the FAD-binding FR-type domain. Residues Thr-327, Gln-361, 391 to 394 (RLYS), 409 to 411 (TVG), and 424 to 427 (GGAS) each bind FAD. NADP(+)-binding positions include 524–525 (SR), 530–534 (KIYVQ), and Asp-566. Tyr-604 serves as a coordination point for FAD.

The protein belongs to the NADPH-dependent sulphite reductase flavoprotein subunit CysJ family. In the N-terminal section; belongs to the flavodoxin family. It in the C-terminal section; belongs to the flavoprotein pyridine nucleotide cytochrome reductase family. As to quaternary structure, alpha(8)-beta(8). The alpha component is a flavoprotein, the beta component is a hemoprotein. It depends on FAD as a cofactor. FMN serves as cofactor.

The enzyme catalyses hydrogen sulfide + 3 NADP(+) + 3 H2O = sulfite + 3 NADPH + 4 H(+). It functions in the pathway sulfur metabolism; hydrogen sulfide biosynthesis; hydrogen sulfide from sulfite (NADPH route): step 1/1. Its function is as follows. Component of the sulfite reductase complex that catalyzes the 6-electron reduction of sulfite to sulfide. This is one of several activities required for the biosynthesis of L-cysteine from sulfate. The flavoprotein component catalyzes the electron flow from NADPH -&gt; FAD -&gt; FMN to the hemoprotein component. The chain is Sulfite reductase [NADPH] flavoprotein alpha-component from Neisseria meningitidis serogroup B (strain ATCC BAA-335 / MC58).